Consider the following 46-residue polypeptide: U2-plectoxin-Pt1a (46 aa).

Contains 4 disulfide bonds. As to expression, expressed by the venom gland.

It localises to the secreted. Functionally, potent toxin that may paralyze and/or kill insect pests such as H.virescens (lepidoptera), S.exigua (beet armyworm) and M.sexta (tobacco hornworm). This chain is U2-plectoxin-Pt1a, found in Plectreurys tristis (Spider).